We begin with the raw amino-acid sequence, 321 residues long: tRNA uridine(34) hydroxylase (321 aa).

One can recognise a Rhodanese domain in the interval 135 to 233; the sequence is DDPLTLVIDT…YLEEVPENES (99 aa). Cys193 (cysteine persulfide intermediate) is an active-site residue.

It belongs to the TrhO family.

It carries out the reaction uridine(34) in tRNA + AH2 + O2 = 5-hydroxyuridine(34) in tRNA + A + H2O. Functionally, catalyzes oxygen-dependent 5-hydroxyuridine (ho5U) modification at position 34 in tRNAs. This chain is tRNA uridine(34) hydroxylase, found in Prochlorococcus marinus (strain SARG / CCMP1375 / SS120).